The chain runs to 179 residues: Large ribosomal subunit protein uL5 (179 aa).

It belongs to the universal ribosomal protein uL5 family. As to quaternary structure, part of the 50S ribosomal subunit; part of the 5S rRNA/L5/L18/L25 subcomplex. Contacts the 5S rRNA and the P site tRNA. Forms a bridge to the 30S subunit in the 70S ribosome.

Its function is as follows. This is one of the proteins that bind and probably mediate the attachment of the 5S RNA into the large ribosomal subunit, where it forms part of the central protuberance. In the 70S ribosome it contacts protein S13 of the 30S subunit (bridge B1b), connecting the 2 subunits; this bridge is implicated in subunit movement. Contacts the P site tRNA; the 5S rRNA and some of its associated proteins might help stabilize positioning of ribosome-bound tRNAs. The sequence is that of Large ribosomal subunit protein uL5 from Idiomarina loihiensis (strain ATCC BAA-735 / DSM 15497 / L2-TR).